Here is a 610-residue protein sequence, read N- to C-terminus: Elongation factor 4 (610 aa).

Positions 14-198 constitute a tr-type G domain; it reads ANIRNFSIVA…AIVTRLPPPQ (185 aa). GTP is bound by residues 26–31 and 145–148; these read DHGKST and NKVD.

Belongs to the TRAFAC class translation factor GTPase superfamily. Classic translation factor GTPase family. LepA subfamily.

The protein resides in the cell inner membrane. It carries out the reaction GTP + H2O = GDP + phosphate + H(+). Functionally, required for accurate and efficient protein synthesis under certain stress conditions. May act as a fidelity factor of the translation reaction, by catalyzing a one-codon backward translocation of tRNAs on improperly translocated ribosomes. Back-translocation proceeds from a post-translocation (POST) complex to a pre-translocation (PRE) complex, thus giving elongation factor G a second chance to translocate the tRNAs correctly. Binds to ribosomes in a GTP-dependent manner. This chain is Elongation factor 4, found in Nitrobacter hamburgensis (strain DSM 10229 / NCIMB 13809 / X14).